A 956-amino-acid polypeptide reads, in one-letter code: DNA replication helicase (956 aa).

Position 120 to 127 (120 to 127 (GTAGAGKT)) interacts with ATP. The segment at 658–694 (PINNHVDADSSQGGQSVPVSQRMEHGQEETHDIPCLS) is disordered. Over residues 667-678 (SSQGGQSVPVSQ) the composition is skewed to low complexity. The segment covering 679 to 694 (RMEHGQEETHDIPCLS) has biased composition (basic and acidic residues).

The protein belongs to the herpesviridae helicase family. As to quaternary structure, associates with the primase and the primase-associated factor to form the helicase-primase complex.

The protein localises to the host nucleus. Component of the helicase/primase complex. Unwinds the DNA at the replication forks and generates single-stranded DNA for both leading and lagging strand synthesis. The primase synthesizes short RNA primers on the lagging strand that the polymerase elongates using dNTPs. Possesses helicase-like motifs and therefore may act as the helicase subunit of the complex. This is DNA replication helicase from Human cytomegalovirus (strain AD169) (HHV-5).